The primary structure comprises 188 residues: Pyridoxal 5'-phosphate synthase subunit PdxT (188 aa).

47–49 (GES) is an L-glutamine binding site. Cys79 acts as the Nucleophile in catalysis. Residues Arg105 and 134–135 (IR) each bind L-glutamine. Active-site charge relay system residues include His170 and Glu172.

It belongs to the glutaminase PdxT/SNO family. In terms of assembly, in the presence of PdxS, forms a dodecamer of heterodimers. Only shows activity in the heterodimer.

The enzyme catalyses aldehydo-D-ribose 5-phosphate + D-glyceraldehyde 3-phosphate + L-glutamine = pyridoxal 5'-phosphate + L-glutamate + phosphate + 3 H2O + H(+). The catalysed reaction is L-glutamine + H2O = L-glutamate + NH4(+). The protein operates within cofactor biosynthesis; pyridoxal 5'-phosphate biosynthesis. Its function is as follows. Catalyzes the hydrolysis of glutamine to glutamate and ammonia as part of the biosynthesis of pyridoxal 5'-phosphate. The resulting ammonia molecule is channeled to the active site of PdxS. This is Pyridoxal 5'-phosphate synthase subunit PdxT from Listeria welshimeri serovar 6b (strain ATCC 35897 / DSM 20650 / CCUG 15529 / CIP 8149 / NCTC 11857 / SLCC 5334 / V8).